The primary structure comprises 122 residues: Hydrogenase maturation factor HypA (122 aa).

Histidine 2 contributes to the Ni(2+) binding site. Cysteine 73, cysteine 75, cysteine 95, and cysteine 98 together coordinate Zn(2+).

Belongs to the HypA/HybF family.

In terms of biological role, involved in the maturation of [NiFe] hydrogenases. Required for nickel insertion into the metal center of the hydrogenase. The chain is Hydrogenase maturation factor HypA from Methanothermobacter thermautotrophicus (strain ATCC 29096 / DSM 1053 / JCM 10044 / NBRC 100330 / Delta H) (Methanobacterium thermoautotrophicum).